The chain runs to 435 residues: Adenylosuccinate synthetase (435 aa).

Residues 11 to 17 and 39 to 41 contribute to the GTP site; these read GDEGKGK and GHT. Aspartate 12 acts as the Proton acceptor in catalysis. Residues aspartate 12 and glycine 39 each coordinate Mg(2+). Residues 12–15, 37–40, threonine 128, arginine 142, glutamine 223, threonine 238, and arginine 302 contribute to the IMP site; these read DEGK and NAGH. Catalysis depends on histidine 40, which acts as the Proton donor. Substrate is bound at residue 298–304; sequence SVTGRPR. GTP is bound by residues arginine 304, 330–332, and 412–414; these read KLD and STG.

This sequence belongs to the adenylosuccinate synthetase family. As to quaternary structure, homodimer. Mg(2+) is required as a cofactor.

It localises to the cytoplasm. The catalysed reaction is IMP + L-aspartate + GTP = N(6)-(1,2-dicarboxyethyl)-AMP + GDP + phosphate + 2 H(+). The protein operates within purine metabolism; AMP biosynthesis via de novo pathway; AMP from IMP: step 1/2. In terms of biological role, plays an important role in the de novo pathway of purine nucleotide biosynthesis. Catalyzes the first committed step in the biosynthesis of AMP from IMP. The chain is Adenylosuccinate synthetase from Coxiella burnetii (strain RSA 493 / Nine Mile phase I).